Here is a 22-residue protein sequence, read N- to C-terminus: Mu-conotoxin GIIIC (22 aa).

Disulfide bonds link Cys3/Cys15, Cys4/Cys20, and Cys10/Cys21. 3 positions are modified to 4-hydroxyproline: Pro6, Pro7, and Pro17. Residue Ala22 is modified to Alanine amide.

The protein belongs to the conotoxin M superfamily. Expressed by the venom duct.

The protein localises to the secreted. Functionally, mu-conotoxins block voltage-gated sodium channels (Nav). This toxin shows potent activity on Nav1.4/SCN4A (IC(50)=286 nM), and weak activity on mNav1.6/SCN8A. The sequence is that of Mu-conotoxin GIIIC from Conus geographus (Geography cone).